The primary structure comprises 469 residues: ATP synthase subunit beta (469 aa).

Position 156–163 (Gly156–Thr163) interacts with ATP.

The protein belongs to the ATPase alpha/beta chains family. F-type ATPases have 2 components, CF(1) - the catalytic core - and CF(0) - the membrane proton channel. CF(1) has five subunits: alpha(3), beta(3), gamma(1), delta(1), epsilon(1). CF(0) has three main subunits: a(1), b(2) and c(9-12). The alpha and beta chains form an alternating ring which encloses part of the gamma chain. CF(1) is attached to CF(0) by a central stalk formed by the gamma and epsilon chains, while a peripheral stalk is formed by the delta and b chains.

It localises to the cell membrane. It catalyses the reaction ATP + H2O + 4 H(+)(in) = ADP + phosphate + 5 H(+)(out). Its function is as follows. Produces ATP from ADP in the presence of a proton gradient across the membrane. The catalytic sites are hosted primarily by the beta subunits. This is ATP synthase subunit beta from Bacillus mycoides (strain KBAB4) (Bacillus weihenstephanensis).